The primary structure comprises 195 residues: 3-isopropylmalate dehydratase small subunit (195 aa).

It belongs to the LeuD family. LeuD type 1 subfamily. In terms of assembly, heterodimer of LeuC and LeuD.

It carries out the reaction (2R,3S)-3-isopropylmalate = (2S)-2-isopropylmalate. The protein operates within amino-acid biosynthesis; L-leucine biosynthesis; L-leucine from 3-methyl-2-oxobutanoate: step 2/4. In terms of biological role, catalyzes the isomerization between 2-isopropylmalate and 3-isopropylmalate, via the formation of 2-isopropylmaleate. The chain is 3-isopropylmalate dehydratase small subunit from Frankia casuarinae (strain DSM 45818 / CECT 9043 / HFP020203 / CcI3).